A 216-amino-acid chain; its full sequence is Refilin-A (216 aa).

The interval 1–83 (MVGHLHLQGM…LPNPPASEMR (83 aa)) is disordered. Over residues 12–22 (DSLKEQGREGL) the composition is skewed to basic and acidic residues. A compositionally biased stretch (pro residues) spans 29–39 (GLPPSPSPSPP). The segment covering 57–71 (ASSEPPGPSEARAPP) has biased composition (low complexity). Residue Arg-163 is modified to Asymmetric dimethylarginine.

Belongs to the Refilin family. In terms of assembly, interacts with FLNA and FLNB.

It localises to the cytoplasm. Its subcellular location is the cytoskeleton. Its function is as follows. Involved in the regulation of the perinuclear actin network and nuclear shape through interaction with filamins. Plays an essential role in actin cytoskeleton formation in developing cartilaginous cells. In Homo sapiens (Human), this protein is Refilin-A.